Consider the following 41-residue polypeptide: Large ribosomal subunit protein bL36 (41 aa).

The protein belongs to the bacterial ribosomal protein bL36 family.

This is Large ribosomal subunit protein bL36 from Ruegeria pomeroyi (strain ATCC 700808 / DSM 15171 / DSS-3) (Silicibacter pomeroyi).